Here is a 173-residue protein sequence, read N- to C-terminus: MTETANLFVLGAAGGVEWGTVIVQVLTFIVLLALLKKFAWGPLKDVMDKRERDINRDIDDAEQAKLNAQKLEEENKQKLKETQEEVQKILEDAKVQARQQQEQIIHEANVRANGMIETAQSEINSQKERAIADINNQVSELSVLIASKVLRKEISEQDQKALVDKYLKEAGDK.

Residues 15 to 35 (GVEWGTVIVQVLTFIVLLALL) traverse the membrane as a helical segment.

The protein belongs to the ATPase B chain family. As to quaternary structure, F-type ATPases have 2 components, F(1) - the catalytic core - and F(0) - the membrane proton channel. F(1) has five subunits: alpha(3), beta(3), gamma(1), delta(1), epsilon(1). F(0) has three main subunits: a(1), b(2) and c(10-14). The alpha and beta chains form an alternating ring which encloses part of the gamma chain. F(1) is attached to F(0) by a central stalk formed by the gamma and epsilon chains, while a peripheral stalk is formed by the delta and b chains.

It localises to the cell membrane. F(1)F(0) ATP synthase produces ATP from ADP in the presence of a proton or sodium gradient. F-type ATPases consist of two structural domains, F(1) containing the extramembraneous catalytic core and F(0) containing the membrane proton channel, linked together by a central stalk and a peripheral stalk. During catalysis, ATP synthesis in the catalytic domain of F(1) is coupled via a rotary mechanism of the central stalk subunits to proton translocation. In terms of biological role, component of the F(0) channel, it forms part of the peripheral stalk, linking F(1) to F(0). The sequence is that of ATP synthase subunit b from Staphylococcus aureus (strain MSSA476).